A 207-amino-acid polypeptide reads, in one-letter code: Ribosomal RNA large subunit methyltransferase E (207 aa).

Gly-51, Trp-53, Asp-69, Asp-85, and Asp-108 together coordinate S-adenosyl-L-methionine. Lys-148 acts as the Proton acceptor in catalysis.

This sequence belongs to the class I-like SAM-binding methyltransferase superfamily. RNA methyltransferase RlmE family.

The protein resides in the cytoplasm. It carries out the reaction uridine(2552) in 23S rRNA + S-adenosyl-L-methionine = 2'-O-methyluridine(2552) in 23S rRNA + S-adenosyl-L-homocysteine + H(+). In terms of biological role, specifically methylates the uridine in position 2552 of 23S rRNA at the 2'-O position of the ribose in the fully assembled 50S ribosomal subunit. The sequence is that of Ribosomal RNA large subunit methyltransferase E from Methanospirillum hungatei JF-1 (strain ATCC 27890 / DSM 864 / NBRC 100397 / JF-1).